The primary structure comprises 682 residues: MADMKTGIFAKNVQKRLNRAQEKVLQKLGKADETKDEQFEEYVQNFKRQEAEGSRLQRELRAYLAAIKGMQDASKKLTESLHEVYEPDWYGREDVKMIGEKCDELWEDFHQKLVDGSLLTLDTYLGQFPDIKTRIAKRSRKLVDYDSARHHLEALQSSKRKDEGRITKAEEEFQKAQKVFEEFNTDLQEELPSLWSRRVGFYVNTFKNVSSLEAKFHKEIALLCHKLYEVMTKLGDQHADKAFTIQGAPSDSGPLRIAKTPSPPEEVSPLPSPTASPNHMLAPASPAPARPKSPTQLRKGPPVPPLPKLTPTKELQQENIINLFDDNFVPEINVTTPSQNEIPETKKVESLLDLDFDPFKPEVVSTGVTHSPMSQTLPWDLWTTTSELVQPASSTAFNGFAQDTTAFAVQSNENVTETLTEAEEAPLGELKVEETPTAAVVEKEAILAEPDEPTEQAAESIEAGDKETTGIAEKESEVVSAAGGAVAVEDSVVVAAGAGEGAVRTEQEAAAEGDKPQGEEKDVDVSQEKVSSIPSVVIEPASNNEGEGEEHHVIMNESKDAAAEMGTQGTDSETSQIGSEQKATEEIQTTPSQDQPASAGDTASDMPPGFLFKVEVLHDFEAANSDELNLKRGDIVLVIPSETTADQEAGWLTGIKESEWLQYRDANSYKGLFPENFTRHLE.

Coiled-coil stretches lie at residues 10-84 (AKNV…LHEV) and 144-191 (DYDS…QEEL). The 217-residue stretch at 24-240 (VLQKLGKADE…MTKLGDQHAD (217 aa)) folds into the BAR domain. 4 disordered regions span residues 244 to 310 (TIQG…PKLT), 446 to 470 (ILAE…ETTG), 501 to 530 (GAVR…QEKV), and 561 to 606 (AAAE…ASDM). The segment covering 261–274 (PSPPEEVSPLPSPT) has biased composition (pro residues). Residues 503–527 (VRTEQEAAAEGDKPQGEEKDVDVSQ) show a composition bias toward basic and acidic residues. The span at 567-596 (TQGTDSETSQIGSEQKATEEIQTTPSQDQP) shows a compositional bias: polar residues. Residues 609–682 (GFLFKVEVLH…FPENFTRHLE (74 aa)) form the SH3 domain.

As to quaternary structure, heterodimer with BIN1. Binds SH3GLB1. Is abundant in the forebrain and cerebellum. It is also found in the adrenal gland, anterior and posterior pituitary.

Its subcellular location is the cytoplasmic vesicle. It localises to the secretory vesicle. It is found in the synaptic vesicle membrane. The protein localises to the cytoplasm. The protein resides in the cytoskeleton. Functionally, may participate in mechanisms of regulated exocytosis in synapses and certain endocrine cell types. May control the properties of the membrane associated cytoskeleton. This Gallus gallus (Chicken) protein is Amphiphysin (AMPH).